A 267-amino-acid chain; its full sequence is Apolipoprotein A-I (267 aa).

An N-terminal signal peptide occupies residues 1–18 (MKATVLTLAVLFLTGSQA). Tandem repeats lie at residues 68-89 (LKLL…EQLG) and 90-111 (PVTQ…QEMS). Residues 68–267 (LKLLDNWDSV…EEYTKKLSTQ (200 aa)) form a 10 X approximate tandem repeats region. The residue at position 110 (methionine 110) is a Methionine sulfoxide. The stretch at 112-122 (KDLEEVKAKVQ) is one 3; half-length repeat. 5 tandem repeats follow at residues 123 to 144 (PYLD…QKVE), 145 to 166 (PLRA…EKLS), 167 to 188 (PLGE…THLA), 189 to 210 (PYSD…ENGG), and 211 to 232 (ARLA…EKAK). Methionine 136 is subject to Methionine sulfoxide. The stretch at 233-243 (PALEDLRQGLL) is one 9; half-length repeat. The stretch at 244 to 267 (PVLESFKVSFLSALEEYTKKLSTQ) is repeat 10.

This sequence belongs to the apolipoprotein A1/A4/E family. In terms of assembly, homodimer. Interacts with APOA1BP and CLU. Component of a sperm activating protein complex (SPAP), consisting of APOA1, an immunoglobulin heavy chain, an immunoglobulin light chain and albumin. Interacts with NDRG1. Interacts with SCGB3A2. Interacts with NAXE and YJEFN3. In terms of processing, glycosylated. Post-translationally, palmitoylated. Phosphorylation sites are present in the extracellular medium. As to expression, major protein of plasma HDL, also found in chylomicrons.

It is found in the secreted. In terms of biological role, participates in the reverse transport of cholesterol from tissues to the liver for excretion by promoting cholesterol efflux from tissues and by acting as a cofactor for the lecithin cholesterol acyltransferase (LCAT). As part of the SPAP complex, activates spermatozoa motility. The sequence is that of Apolipoprotein A-I (APOA1) from Papio hamadryas (Hamadryas baboon).